Here is a 247-residue protein sequence, read N- to C-terminus: PABIR family member 2 (247 aa).

The disordered stretch occupies residues 1 to 23; that stretch reads MAQEKMELDLEPDTSYGGTLRRS. A2 carries the post-translational modification N-acetylalanine. Phosphoserine occurs at positions 25, 33, 50, 58, and 63. Positions 82-104 are disordered; it reads ISQSWDESLSLSDSDFDKPEKLY. Positions 83–94 are enriched in low complexity; that stretch reads SQSWDESLSLSD. Residue T112 is modified to Phosphothreonine. S115 and S119 each carry phosphoserine. Omega-N-methylarginine is present on R122. Disordered regions lie at residues 129–152, 158–177, and 202–230; these read VSSS…SQSP, PSVL…SQPK, and DILD…SPVA. Phosphoserine is present on residues S137 and S141. Basic and acidic residues predominate over residues 166 to 176; the sequence is RKGEMETESQP. The span at 202-216 shows a compositional bias: low complexity; it reads DILDGSSSSSGLSSD.

It belongs to the FAM122 family. In terms of processing, isoform 3 and isoform 4 are phosphorylated on Ser-62 and Ser-64.

The protein is PABIR family member 2 of Homo sapiens (Human).